The following is a 200-amino-acid chain: Outer-membrane lipoprotein LolB (200 aa).

Residues 1–18 (MRRGRLLIAGLAALVLSA) form the signal peptide. Cys-19 carries the N-palmitoyl cysteine lipid modification. Cys-19 is lipidated: S-diacylglycerol cysteine.

It belongs to the LolB family. Monomer.

It is found in the cell outer membrane. Functionally, plays a critical role in the incorporation of lipoproteins in the outer membrane after they are released by the LolA protein. In Alkalilimnicola ehrlichii (strain ATCC BAA-1101 / DSM 17681 / MLHE-1), this protein is Outer-membrane lipoprotein LolB.